A 141-amino-acid chain; its full sequence is Large ribosomal subunit protein uL11 (141 aa).

The protein belongs to the universal ribosomal protein uL11 family. In terms of assembly, part of the ribosomal stalk of the 50S ribosomal subunit. Interacts with L10 and the large rRNA to form the base of the stalk. L10 forms an elongated spine to which L12 dimers bind in a sequential fashion forming a multimeric L10(L12)X complex. One or more lysine residues are methylated.

Forms part of the ribosomal stalk which helps the ribosome interact with GTP-bound translation factors. The polypeptide is Large ribosomal subunit protein uL11 (Clostridium kluyveri (strain ATCC 8527 / DSM 555 / NBRC 12016 / NCIMB 10680 / K1)).